Here is a 191-residue protein sequence, read N- to C-terminus: Putative endogenous retrovirus group K member 11-1 Env polyprotein (191 aa).

The segment at 1–191 is truncated surface protein; sequence MPGAIDDHCP…DITLHPQGLV (191 aa).

Belongs to the beta type-B retroviral envelope protein family. HERV class-II K(HML-8) env subfamily. As to expression, cerebellum and testis.

The protein resides in the virion. Retroviral envelope proteins mediate receptor recognition and membrane fusion during early infection. Endogenous envelope proteins may have kept, lost or modified their original function during evolution. The protein is Putative endogenous retrovirus group K member 11-1 Env polyprotein (ERVK11-1) of Homo sapiens (Human).